The chain runs to 254 residues: Tyrosine-protein phosphatase YwqE (254 aa).

Belongs to the metallo-dependent hydrolases superfamily. CpsB/CapC family. Mn(2+) is required as a cofactor.

The enzyme catalyses O-phospho-L-tyrosyl-[protein] + H2O = L-tyrosyl-[protein] + phosphate. Its activity is regulated as follows. Inhibited by vanadate and sodium pyrophosphate. Not inhibited by sodium fluoride. Dephosphorylates the phosphotyrosine-containing proteins YwqD, YwqF and Ssb. This Bacillus subtilis (strain 168) protein is Tyrosine-protein phosphatase YwqE (ywqE).